Consider the following 930-residue polypeptide: Wings apart-like protein 1 (930 aa).

Residues 540–566 (FSPTSMSGSQSSVSGNEPTTSKTRVGS) are disordered. Residues 541 to 553 (SPTSMSGSQSSVS) are compositionally biased toward low complexity. Residues 554–566 (GNEPTTSKTRVGS) show a composition bias toward polar residues. One can recognise a WAPL domain in the interval 854–909 (KEAEKMIVEAYSALLLAFLSTESRSIRNSIKDYLPKRNLAILVPVLERFVAFHMTL).

Belongs to the WAPL family. In terms of assembly, interacts with the cohesin complex throughout the cell cycle. In terms of tissue distribution, expressed in roots, leaves, buds and siliques.

It localises to the nucleus. Its subcellular location is the chromosome. Functionally, regulator of sister chromatid cohesion in meiosis which negatively regulates cohesin association with chromatin, acting as an antagonist of CTF7. Cohesion ensures that chromosome partitioning is accurate in both meiotic and mitotic cells and plays an important role in DNA repair. Essential for the prophase removal of cohesin during meiosis thus determining the timely release of meiotic cohesion. Important for proper spindle attachment and assembly during meiosis. Helps to prevent abnormal centromere association during prophase I in meiocytes. Required for early embryonic patterning. Also involved in chromosome segregation during mitosis. This Arabidopsis thaliana (Mouse-ear cress) protein is Wings apart-like protein 1.